The following is a 793-amino-acid chain: Serine/threonine-protein kinase MARK1 (793 aa).

Residues 1-40 (MSARTPLPTVNERDTENHTSVDGYTETHIPPTKSSSRQNI) are disordered. The residue at position 5 (Thr5) is a Phosphothreonine. The 252-residue stretch at 60–311 (YRLQKTIGKG…LEQIMKDRWM (252 aa)) folds into the Protein kinase domain. ATP-binding positions include 66–74 (IGKGNFAKV) and Lys89. The active-site Proton acceptor is Asp182. At Thr208 the chain carries Phosphothreonine. Thr215 carries the post-translational modification Phosphothreonine; by LKB1 and TAOK1. Ser219 is subject to Phosphoserine; by GSK3-beta. The UBA domain occupies 329-370 (DLNDAKRIDIMVTMGFARDEINDALVSQKYDEVMATYILLGR). 2 disordered regions span residues 377 to 499 (GGES…GGSM) and 517 to 697 (LQNG…KPRS). Polar residues predominate over residues 380-403 (SLSSGNLCQRSRPSSDLNNSTLQS). A phosphoserine mark is found at Ser382, Ser390, Ser393, Ser403, Ser423, and Ser444. The segment covering 447-459 (SEQKEEWDKDTAR) has biased composition (basic and acidic residues). The segment covering 462–473 (GSTTVGSKSEVT) has biased composition (polar residues). Position 475 is a phosphoserine (Ser475). A compositionally biased stretch (polar residues) spans 487-499 (AGPSNNVYSGGSM). Low complexity-rich tracts occupy residues 523–547 (SSLTEMSASSMSSTGSTVASAGPSA) and 585–599 (PAASPSAHSISASTP). The residue at position 588 (Ser588) is a Phosphoserine. Thr613 carries the phosphothreonine; by PKC/PRKCZ modification. A compositionally biased stretch (polar residues) spans 647–657 (GTSTGIISKIT). Basic and acidic residues-rich tracts occupy residues 661 to 676 (VRRDPSEGEASGRTDT) and 683 to 695 (EPKDKEEGKEAKP). At Ser666 the chain carries Phosphoserine. Positions 744-793 (DARQDSLVQWEMEVCKLPRLSLNGVRFKRISGTSIAFKNIASKIANELKL) constitute a KA1 domain.

It belongs to the protein kinase superfamily. CAMK Ser/Thr protein kinase family. SNF1 subfamily. Interacts with MAPT/TAU. The cofactor is Mg(2+). Phosphorylation at Thr-613 by PRKCZ/aPKC in polarized epithelial cells inhibits the kinase activity. Phosphorylated at Thr-215 by STK11/LKB1 in complex with STE20-related adapter-alpha (STRADA) pseudo kinase and CAB39. Phosphorylation at Thr-215 by TAOK1 activates the kinase activity, leading to phosphorylation and detachment of MAPT/TAU from microtubules. Phosphorylation at Ser-219 by GSK3-beta (GSK3B) inhibits the kinase activity. Highly expressed in brain and spleen and at lower levels in kidney and skeletal muscle.

The protein localises to the cell membrane. Its subcellular location is the cytoplasm. The protein resides in the cytoskeleton. It localises to the cell projection. It is found in the dendrite. It carries out the reaction L-seryl-[protein] + ATP = O-phospho-L-seryl-[protein] + ADP + H(+). It catalyses the reaction L-threonyl-[protein] + ATP = O-phospho-L-threonyl-[protein] + ADP + H(+). The catalysed reaction is L-seryl-[tau protein] + ATP = O-phospho-L-seryl-[tau protein] + ADP + H(+). The enzyme catalyses L-threonyl-[tau protein] + ATP = O-phospho-L-threonyl-[tau protein] + ADP + H(+). Activated by phosphorylation on Thr-215. Inhibited by phosphorylation at Ser-219. Its function is as follows. Serine/threonine-protein kinase. Involved in cell polarity and microtubule dynamics regulation. Phosphorylates DCX, MAP2 and MAP4. Phosphorylates the microtubule-associated protein MAPT/TAU. Involved in cell polarity by phosphorylating the microtubule-associated proteins MAP2, MAP4 and MAPT/TAU at KXGS motifs, causing detachment from microtubules, and their disassembly. Involved in the regulation of neuronal migration through its dual activities in regulating cellular polarity and microtubule dynamics, possibly by phosphorylating and regulating DCX. Also acts as a positive regulator of the Wnt signaling pathway, probably by mediating phosphorylation of dishevelled proteins (DVL1, DVL2 and/or DVL3). This chain is Serine/threonine-protein kinase MARK1, found in Rattus norvegicus (Rat).